The following is a 126-amino-acid chain: Major sperm protein 1 (126 aa).

The residue at position 2 (Ala-2) is an N-acetylalanine. The MSP domain maps to Asp-8 to Asn-125.

In terms of tissue distribution, sperm.

It localises to the cell projection. Its subcellular location is the pseudopodium. It is found in the cytoplasm. The protein resides in the cytoskeleton. Its function is as follows. Central component in molecular interactions underlying sperm crawling. Forms an extensive filament system that extends from sperm villipoda, along the leading edge of the pseudopod. In Globodera rostochiensis (Golden nematode worm), this protein is Major sperm protein 1 (MSP-1).